Reading from the N-terminus, the 459-residue chain is Cysteine--tRNA ligase (459 aa).

Cysteine 28 is a Zn(2+) binding site. Positions 30–40 (ITIYDLCHIGH) match the 'HIGH' region motif. Zn(2+)-binding residues include cysteine 209, histidine 234, and glutamate 238. The 'KMSKS' region motif lies at 266-270 (KMSKS). Lysine 269 lines the ATP pocket.

Belongs to the class-I aminoacyl-tRNA synthetase family. Monomer. Zn(2+) serves as cofactor.

It is found in the cytoplasm. It catalyses the reaction tRNA(Cys) + L-cysteine + ATP = L-cysteinyl-tRNA(Cys) + AMP + diphosphate. This Shewanella sediminis (strain HAW-EB3) protein is Cysteine--tRNA ligase.